Consider the following 218-residue polypeptide: Elongation factor Ts (218 aa).

Residues 82–85 (TDFV) form an involved in Mg(2+) ion dislocation from EF-Tu region.

Belongs to the EF-Ts family.

It localises to the cytoplasm. Its function is as follows. Associates with the EF-Tu.GDP complex and induces the exchange of GDP to GTP. It remains bound to the aminoacyl-tRNA.EF-Tu.GTP complex up to the GTP hydrolysis stage on the ribosome. The protein is Elongation factor Ts of Prochlorococcus marinus (strain AS9601).